Here is a 199-residue protein sequence, read N- to C-terminus: Probable nicotinate-nucleotide adenylyltransferase (199 aa).

This sequence belongs to the NadD family.

The catalysed reaction is nicotinate beta-D-ribonucleotide + ATP + H(+) = deamido-NAD(+) + diphosphate. It participates in cofactor biosynthesis; NAD(+) biosynthesis; deamido-NAD(+) from nicotinate D-ribonucleotide: step 1/1. Catalyzes the reversible adenylation of nicotinate mononucleotide (NaMN) to nicotinic acid adenine dinucleotide (NaAD). This Chloroherpeton thalassium (strain ATCC 35110 / GB-78) protein is Probable nicotinate-nucleotide adenylyltransferase.